We begin with the raw amino-acid sequence, 514 residues long: MGNKSLAEKIAELSKPSTEFDIEDNDLRDNVFDHNGDDDHSNSDSSDDETLKKQHYLAVDKSNIRNENGNLNLGKAYGGKVTSRGDLYESDEESRSLDEHENSEDSDSGISLKTNSESESEDDDEDESESEDKDEVTKEEDSNLTHKRSKLKELMSNERQHIVNRLSQSASNDAVKGFAILQQHKLFDSIIDSRMKVQKSLTNSNVLPIKRDILKGHFATKKTDKYLNQTSEKCFDLLDSILALRSKLLKKDSVLSSSESPKSFNPKKRTLTDYLEATGKQDTVLERYRSSVLSKWSSKIHNAAGSTAISSGKFKAINQSAEQQVINNLSDMDRLIKRTKLNRRQVKPLGYEYHTSQSDITEQGSIDDQNQDIPNENKQTNKSDLSELASIFDDEDFYRVLLNDLVDKKIQSSDPASGLTVSLRSVQQAQKFKKNIDTKASKGRKLRYHIQEQIANFEAPRGGWKWDDNQIDEFFASLLGQKVNMNEVDEDEDHNNDDDEEIVINSNDSFKLFG.

2 disordered regions span residues 14 to 153 and 353 to 382; these read SKPS…KLKE and YHTSQSDITEQGSIDDQNQDIPNENKQTNK. The segment covering 25-42 has biased composition (basic and acidic residues); sequence NDLRDNVFDHNGDDDHSN. The span at 118-134 shows a compositional bias: acidic residues; that stretch reads SESEDDDEDESESEDKD. The span at 135–144 shows a compositional bias: basic and acidic residues; that stretch reads EVTKEEDSNL. Over residues 354–378 the composition is skewed to polar residues; sequence HTSQSDITEQGSIDDQNQDIPNENK.

It belongs to the AATF family.

Its subcellular location is the nucleus. It is found in the nucleolus. This is Protein BFR2 (BFR2) from Debaryomyces hansenii (strain ATCC 36239 / CBS 767 / BCRC 21394 / JCM 1990 / NBRC 0083 / IGC 2968) (Yeast).